Here is an 867-residue protein sequence, read N- to C-terminus: Alanine--tRNA ligase (867 aa).

Positions 559, 563, 661, and 665 each coordinate Zn(2+).

Belongs to the class-II aminoacyl-tRNA synthetase family. Zn(2+) serves as cofactor.

Its subcellular location is the cytoplasm. It carries out the reaction tRNA(Ala) + L-alanine + ATP = L-alanyl-tRNA(Ala) + AMP + diphosphate. In terms of biological role, catalyzes the attachment of alanine to tRNA(Ala) in a two-step reaction: alanine is first activated by ATP to form Ala-AMP and then transferred to the acceptor end of tRNA(Ala). Also edits incorrectly charged Ser-tRNA(Ala) and Gly-tRNA(Ala) via its editing domain. The protein is Alanine--tRNA ligase of Aquifex aeolicus (strain VF5).